The primary structure comprises 128 residues: Ribonuclease P protein component (128 aa).

The protein belongs to the RnpA family. In terms of assembly, consists of a catalytic RNA component (M1 or rnpB) and a protein subunit.

The enzyme catalyses Endonucleolytic cleavage of RNA, removing 5'-extranucleotides from tRNA precursor.. RNaseP catalyzes the removal of the 5'-leader sequence from pre-tRNA to produce the mature 5'-terminus. It can also cleave other RNA substrates such as 4.5S RNA. The protein component plays an auxiliary but essential role in vivo by binding to the 5'-leader sequence and broadening the substrate specificity of the ribozyme. This chain is Ribonuclease P protein component, found in Prochlorococcus marinus (strain MIT 9303).